Consider the following 100-residue polypeptide: MELTPREKDKMLIFTAGLVAERRRERGLKLNYPEAVAYISAAVLEKAREGMSVAELMHHGTTLLTRDEVMEGVPEMISDIQVEATFPDGTKLVTVHHPIT.

It belongs to the urease gamma subunit family. As to quaternary structure, heterotrimer of UreA (gamma), UreB (beta) and UreC (alpha) subunits. Three heterotrimers associate to form the active enzyme.

The protein localises to the cytoplasm. The catalysed reaction is urea + 2 H2O + H(+) = hydrogencarbonate + 2 NH4(+). It functions in the pathway nitrogen metabolism; urea degradation; CO(2) and NH(3) from urea (urease route): step 1/1. In Nitrosococcus oceani (strain ATCC 19707 / BCRC 17464 / JCM 30415 / NCIMB 11848 / C-107), this protein is Urease subunit gamma.